We begin with the raw amino-acid sequence, 270 residues long: Regulatory protein RecX (270 aa).

The protein belongs to the RecX family.

It localises to the cytoplasm. In terms of biological role, modulates RecA activity. The protein is Regulatory protein RecX of Bacillus cytotoxicus (strain DSM 22905 / CIP 110041 / 391-98 / NVH 391-98).